Consider the following 166-residue polypeptide: uncharacterized protein (166 aa).

Helical transmembrane passes span 7–27, 30–50, 69–89, and 92–112; these read VLFKISFLLIILVSLILSLFY, FLFAFLLSFILFGITWAYCYI, IETLRFLFILMIISVFIKSLL, and NSFFPYISFLLSNLILGLVLF.

It to M.jannaschii MJ0795.1 and MJ0785.1.

Its subcellular location is the cell membrane. This is an uncharacterized protein from Methanocaldococcus jannaschii (strain ATCC 43067 / DSM 2661 / JAL-1 / JCM 10045 / NBRC 100440) (Methanococcus jannaschii).